A 215-amino-acid polypeptide reads, in one-letter code: Peptide methionine sulfoxide reductase MsrA (215 aa).

Residue C58 is part of the active site.

It belongs to the MsrA Met sulfoxide reductase family.

The catalysed reaction is L-methionyl-[protein] + [thioredoxin]-disulfide + H2O = L-methionyl-(S)-S-oxide-[protein] + [thioredoxin]-dithiol. The enzyme catalyses [thioredoxin]-disulfide + L-methionine + H2O = L-methionine (S)-S-oxide + [thioredoxin]-dithiol. Functionally, has an important function as a repair enzyme for proteins that have been inactivated by oxidation. Catalyzes the reversible oxidation-reduction of methionine sulfoxide in proteins to methionine. The protein is Peptide methionine sulfoxide reductase MsrA of Pseudomonas syringae pv. tomato (strain ATCC BAA-871 / DC3000).